We begin with the raw amino-acid sequence, 468 residues long: Meiotically up-regulated gene 111 protein (468 aa).

12 helical membrane passes run 13 to 33, 59 to 79, 92 to 112, 116 to 136, 158 to 178, 190 to 210, 285 to 305, 330 to 350, 356 to 376, 382 to 402, 417 to 437, and 446 to 466; these read LVLIYLWYLVDCTSFSMNSVT, IVSASSCLLQYLVALVVVPFY, VFTTWVGEEYFFFASTLSILY, FPTCAYFVIFSISFLLGISGT, IVVLNSIFVVSSCIGPFLGSI, LISWTIHFINFVFHSLLAVFF, PIPIVLLCFFLYSLLTPFFDI, FGSLLTCSVCLFLTYVGGFSV, TMLIGLTATTLIIFILYFATA, LALFYGITSSIGPSIHGLVAA, ALLEASATFISYPFQSLAFIV, and FFIGPICICLLGSISSYLLLG.

It is found in the membrane. Functionally, has a role in meiosis. The sequence is that of Meiotically up-regulated gene 111 protein (mug111) from Schizosaccharomyces pombe (strain 972 / ATCC 24843) (Fission yeast).